Consider the following 231-residue polypeptide: LexA repressor (231 aa).

A DNA-binding region (H-T-H motif) is located at residues R31 to Q51. Residues S148 and K185 each act as for autocatalytic cleavage activity in the active site.

The protein belongs to the peptidase S24 family. In terms of assembly, homodimer.

The enzyme catalyses Hydrolysis of Ala-|-Gly bond in repressor LexA.. Functionally, represses a number of genes involved in the response to DNA damage (SOS response), including recA and lexA. In the presence of single-stranded DNA, RecA interacts with LexA causing an autocatalytic cleavage which disrupts the DNA-binding part of LexA, leading to derepression of the SOS regulon and eventually DNA repair. This Leptothrix cholodnii (strain ATCC 51168 / LMG 8142 / SP-6) (Leptothrix discophora (strain SP-6)) protein is LexA repressor.